We begin with the raw amino-acid sequence, 83 residues long: Putative defensin-like protein 257 (83 aa).

The first 25 residues, 1 to 25 (MMNVSLKLSFLVFILVIMSNLGSEA), serve as a signal peptide directing secretion. 3 disulfides stabilise this stretch: cysteine 57-cysteine 73, cysteine 63-cysteine 80, and cysteine 67-cysteine 82.

It belongs to the DEFL family.

It localises to the secreted. The sequence is that of Putative defensin-like protein 257 from Arabidopsis thaliana (Mouse-ear cress).